The primary structure comprises 440 residues: MADHEQEQEPLSIAIIGGGIIGLMTALGLLHRNIGKVTIYERASAWPDIGAAFAFTGIARECMQRLDPAILSALSKVAQRNPHDKVRYWDGFHPKSKEEAQDPEKSVLFEIEEKNMAYWACLRGVFHAEMARLLPERVVRFGKRLVAYEDGGDQKVVLRFEDGEVEEADIVIACDGVHSTARRVLLGAEHPAANARYSRKAVYRALVPMPAAIDALGTEKAHVQIAHCGPDAHIVSFPVNNAQIYNVFLFTHDSNEWTHGHTMTVPSSKEEILSAVENWGPHIKELASLFPEQLSKYAIFDQADHPLPYYAAGRVALAGDAAHASSPFHGAGACMGVEDALVLAELLEKVQNGSAFKEKKSNIELALKTYSDVRIERSQWLVKSSREMGDLYEWRYEDIGGDGVKCKAEWERRSRVIWDFDVQGMVDQAREAYERAVVKV.

The helical transmembrane segment at 10–30 (PLSIAIIGGGIIGLMTALGLL) threads the bilayer. Residues Glu41, Leu145, and Asp320 each coordinate FAD. A glycan (N-linked (GlcNAc...) asparagine) is linked at Asn352.

It belongs to the paxM FAD-dependent monooxygenase family. Requires FAD as cofactor.

It localises to the membrane. Functionally, FAD-dependent monooxygenase; part of the gene cluster that mediates the biosynthesis of asperfuranone, a probable antitumor agent. The polyketide synthase afoG is responsible for producing the 3,5-dimethyloctadienone moiety from acetyl-CoA, three malonyl-CoA, and two S-adenosyl methionines (SAM). The 3,5-dimethyloctadienone moiety is then loaded onto the SAT domain of afoE and extended with four malonyl-CoA and one SAM, which leads to the formation of 2,4-dihydroxy-6-(5,7-dimethyl-2-oxo-trans-3-trans-5-nonadienyl)-3-methylbenzaldehyde (compound 2) after reductive release and aldol condensation. AfoD is the next enzyme in the biosynthesis sequence and hydroxylates the side chain at the benzylic position of compound 2. After benzylic hydroxylation, a furan ring is formed after five-member ring hemiacetal formation and water elimination. AfoF and afoC are proposed to oxidize the R-diketone proton and to reduce the unconjugated carbonyl group, respectively, to generate asperfuranone. Since no intermediates could be isolated from afoF and afoC deletants, the sequence of these two enzymes is not fully understood. Moreover, since afoC deletant still produces a small amount of asperfuranone, other endogenous oxidoreductases might catalyze the same reaction with much less efficiency. This Emericella nidulans (strain FGSC A4 / ATCC 38163 / CBS 112.46 / NRRL 194 / M139) (Aspergillus nidulans) protein is FAD-dependent monooxygenase afoD.